We begin with the raw amino-acid sequence, 464 residues long: Argininosuccinate lyase (464 aa).

It belongs to the lyase 1 family. Argininosuccinate lyase subfamily.

The protein resides in the cytoplasm. It catalyses the reaction 2-(N(omega)-L-arginino)succinate = fumarate + L-arginine. It functions in the pathway amino-acid biosynthesis; L-arginine biosynthesis; L-arginine from L-ornithine and carbamoyl phosphate: step 3/3. This chain is Argininosuccinate lyase, found in Pseudomonas aeruginosa (strain LESB58).